The following is a 249-amino-acid chain: Isoprenyl transferase (249 aa).

The active site involves Asp-29. Asp-29 contacts Mg(2+). Residues 30–33, Trp-34, Arg-42, His-46, and 74–76 each bind substrate; these read GNGR and STE. Asn-77 (proton acceptor) is an active-site residue. Residues Trp-78, Arg-80, Arg-197, and 203–205 contribute to the substrate site; that span reads RLS. A Mg(2+)-binding site is contributed by Glu-216.

This sequence belongs to the UPP synthase family. In terms of assembly, homodimer. It depends on Mg(2+) as a cofactor.

Catalyzes the condensation of isopentenyl diphosphate (IPP) with allylic pyrophosphates generating different type of terpenoids. The chain is Isoprenyl transferase from Trichormus variabilis (strain ATCC 29413 / PCC 7937) (Anabaena variabilis).